A 98-amino-acid chain; its full sequence is NADH-ubiquinone oxidoreductase chain 4L (98 aa).

Transmembrane regions (helical) follow at residues 1–21, 29–49, and 61–81; these read MSMV…GLLM, SLLC…LTIL, and IILL…LVMV.

The protein belongs to the complex I subunit 4L family. As to quaternary structure, core subunit of respiratory chain NADH dehydrogenase (Complex I) which is composed of 45 different subunits.

The protein localises to the mitochondrion inner membrane. The enzyme catalyses a ubiquinone + NADH + 5 H(+)(in) = a ubiquinol + NAD(+) + 4 H(+)(out). Core subunit of the mitochondrial membrane respiratory chain NADH dehydrogenase (Complex I) which catalyzes electron transfer from NADH through the respiratory chain, using ubiquinone as an electron acceptor. Part of the enzyme membrane arm which is embedded in the lipid bilayer and involved in proton translocation. The protein is NADH-ubiquinone oxidoreductase chain 4L (MT-ND4L) of Bos mutus grunniens (Wild yak).